The sequence spans 124 residues: Type-4 ice-structuring protein (124 aa).

The first 20 residues, 1–20, serve as a signal peptide directing secretion; it reads MKFSLIAAVALLALAQGSFA. Gln-21 carries the pyrrolidone carboxylic acid modification.

It belongs to the apolipoprotein A1/A4/E family.

It localises to the secreted. Functionally, antifreeze proteins lower the blood freezing point. The chain is Type-4 ice-structuring protein from Paralichthys olivaceus (Bastard halibut).